We begin with the raw amino-acid sequence, 240 residues long: MSLLSIAALDLALGGHLVLENVHLTLERGEIVTIVGPNGSGKTTLLKSIIGALTPQRGCIDKSPGMVIGYVPQRLHLDATLPMTVSRLMRLPRRRPTHEIETALDRAGVTQQASSQVSDLSGGQFQRVLLARALLSSPDLLILDEATQGLDQQGMADFYRQIERVRHELGCAVLMVSHELHVVMRASDRVICLNRSICCAGTPERVAASPAYRAMFGLDDEDALALYRHHHSRSSLEMSP.

The 219-residue stretch at 1-219 (MSLLSIAALD…PAYRAMFGLD (219 aa)) folds into the ABC transporter domain. 36 to 43 (GPNGSGKT) serves as a coordination point for ATP.

The protein belongs to the ABC transporter superfamily. Zinc importer (TC 3.A.1.15.5) family. The complex is composed of two ATP-binding proteins (ZnuC), two transmembrane proteins (ZnuB) and a solute-binding protein (ZnuA).

Its subcellular location is the cell inner membrane. It carries out the reaction Zn(2+)(out) + ATP(in) + H2O(in) = Zn(2+)(in) + ADP(in) + phosphate(in) + H(+)(in). Functionally, part of the ABC transporter complex ZnuABC involved in zinc import. Responsible for energy coupling to the transport system. This chain is Zinc import ATP-binding protein ZnuC, found in Chromohalobacter salexigens (strain ATCC BAA-138 / DSM 3043 / CIP 106854 / NCIMB 13768 / 1H11).